Consider the following 439-residue polypeptide: Actin-related protein 3 (439 aa).

The interval 40–71 (PSAGTGGSGSGRPAVANKPSFLTGGAGPGGHL) is disordered.

The protein belongs to the actin family. ARP3 subfamily. In terms of assembly, component of the Arp2/3 complex composed.

It localises to the cytoplasm. The protein localises to the cytoskeleton. Functions as ATP-binding component of the Arp2/3 complex which is involved in regulation of actin polymerization and together with an activating nucleation-promoting factor (NPF) mediates the formation of branched actin networks. Seems to contact the pointed end of the daughter actin filament. This is Actin-related protein 3 (arp-3) from Neurospora crassa (strain ATCC 24698 / 74-OR23-1A / CBS 708.71 / DSM 1257 / FGSC 987).